The sequence spans 483 residues: Glutamyl-tRNA(Gln) amidotransferase subunit A (483 aa).

Catalysis depends on charge relay system residues K76 and S151. The Acyl-ester intermediate role is filled by S175.

The protein belongs to the amidase family. GatA subfamily. As to quaternary structure, heterotrimer of A, B and C subunits.

The enzyme catalyses L-glutamyl-tRNA(Gln) + L-glutamine + ATP + H2O = L-glutaminyl-tRNA(Gln) + L-glutamate + ADP + phosphate + H(+). In terms of biological role, allows the formation of correctly charged Gln-tRNA(Gln) through the transamidation of misacylated Glu-tRNA(Gln) in organisms which lack glutaminyl-tRNA synthetase. The reaction takes place in the presence of glutamine and ATP through an activated gamma-phospho-Glu-tRNA(Gln). This chain is Glutamyl-tRNA(Gln) amidotransferase subunit A, found in Pseudomonas putida (strain ATCC 47054 / DSM 6125 / CFBP 8728 / NCIMB 11950 / KT2440).